A 438-amino-acid polypeptide reads, in one-letter code: ATP-dependent RNA helicase RhlB (438 aa).

A Q motif motif is present at residues 9–37 (QRFADLPLHPEVKQALAENGFEFCTPIQA). The region spanning 40–219 (LPVLLQSKDI…YDHMNEPVKV (180 aa)) is the Helicase ATP-binding domain. 53–60 (AQTGTGKT) lines the ATP pocket. The DEAD box motif lies at 165 to 168 (DEAD). Positions 243 to 390 (KMRLLLTLIE…VSNYDSEALL (148 aa)) constitute a Helicase C-terminal domain. Positions 395 to 438 (TPAKIHRKHPSGTRNLRDRSGTSRPGAQRSGARPPRHDRTRRHS) are disordered. The span at 428-438 (PPRHDRTRRHS) shows a compositional bias: basic residues.

It belongs to the DEAD box helicase family. RhlB subfamily. As to quaternary structure, component of the RNA degradosome, which is a multiprotein complex involved in RNA processing and mRNA degradation.

The protein localises to the cytoplasm. The catalysed reaction is ATP + H2O = ADP + phosphate + H(+). Functionally, DEAD-box RNA helicase involved in RNA degradation. Has RNA-dependent ATPase activity and unwinds double-stranded RNA. The polypeptide is ATP-dependent RNA helicase RhlB (Shewanella baltica (strain OS223)).